The chain runs to 83 residues: Kunitz-type serine protease inhibitor vestiginin-3 (83 aa).

An N-terminal signal peptide occupies residues 1–24; the sequence is MSSGGLLLLLGLLTLWAELTPVSS. Positions 31–81 constitute a BPTI/Kunitz inhibitor domain; that stretch reads CKLPKEPGPCRSYLLYFYYNSVEHKCQTFHYGGCEGNENRFHTIEECKSTC. Disulfide bonds link C31/C81, C40/C64, and C56/C77.

This sequence belongs to the venom Kunitz-type family. As to expression, expressed by the venom gland.

The protein localises to the secreted. Its function is as follows. Serine protease inhibitor. This is Kunitz-type serine protease inhibitor vestiginin-3 from Demansia vestigiata (Lesser black whip snake).